A 444-amino-acid polypeptide reads, in one-letter code: tRNA-2-methylthio-N(6)-dimethylallyladenosine synthase (444 aa).

Residues 3 to 117 (RGLYIESYGC…LPELIMKVKR (115 aa)) enclose the MTTase N-terminal domain. Positions 12, 48, 80, 155, 159, and 162 each coordinate [4Fe-4S] cluster. A Radical SAM core domain is found at 141–374 (ANGGVSAYVS…LLTKQQLQFN (234 aa)). The TRAM domain maps to 375–441 (KSMEGRVMDV…QNSLEGTVLS (67 aa)).

Belongs to the methylthiotransferase family. MiaB subfamily. Monomer. The cofactor is [4Fe-4S] cluster.

Its subcellular location is the cytoplasm. It carries out the reaction N(6)-dimethylallyladenosine(37) in tRNA + (sulfur carrier)-SH + AH2 + 2 S-adenosyl-L-methionine = 2-methylsulfanyl-N(6)-dimethylallyladenosine(37) in tRNA + (sulfur carrier)-H + 5'-deoxyadenosine + L-methionine + A + S-adenosyl-L-homocysteine + 2 H(+). Functionally, catalyzes the methylthiolation of N6-(dimethylallyl)adenosine (i(6)A), leading to the formation of 2-methylthio-N6-(dimethylallyl)adenosine (ms(2)i(6)A) at position 37 in tRNAs that read codons beginning with uridine. This chain is tRNA-2-methylthio-N(6)-dimethylallyladenosine synthase, found in Anaplasma phagocytophilum (strain HZ).